The chain runs to 265 residues: 3'(2'),5'-bisphosphate nucleotidase CysQ (265 aa).

5 residues coordinate Mg(2+): Glu80, Asp99, Leu101, Asp102, and Asp222. Glu80 is a substrate binding site. Residues Leu101 to Thr104 and Asp222 each bind substrate.

This sequence belongs to the inositol monophosphatase superfamily. CysQ family. Requires Mg(2+) as cofactor.

It is found in the cell inner membrane. The enzyme catalyses adenosine 3',5'-bisphosphate + H2O = AMP + phosphate. In terms of biological role, converts adenosine-3',5'-bisphosphate (PAP) to AMP. The protein is 3'(2'),5'-bisphosphate nucleotidase CysQ of Buchnera aphidicola subsp. Acyrthosiphon pisum (strain APS) (Acyrthosiphon pisum symbiotic bacterium).